The primary structure comprises 35 residues: U1-segestritoxin-Sf1a (35 aa).

Intrachain disulfides connect Cys-10-Cys-22 and Cys-17-Cys-28. Residues 31–33 (DPW) are keys region for toxin activity.

This sequence belongs to the neurotoxin 16 (SFI) family. In terms of tissue distribution, expressed by the venom gland.

It is found in the secreted. Its function is as follows. Insecticidal toxin. The sequence is that of U1-segestritoxin-Sf1a from Segestria florentina (Tube-web spider).